The sequence spans 311 residues: Methionyl-tRNA formyltransferase (311 aa).

110–113 (SLLP) is a (6S)-5,6,7,8-tetrahydrofolate binding site.

This sequence belongs to the Fmt family.

It catalyses the reaction L-methionyl-tRNA(fMet) + (6R)-10-formyltetrahydrofolate = N-formyl-L-methionyl-tRNA(fMet) + (6S)-5,6,7,8-tetrahydrofolate + H(+). In terms of biological role, attaches a formyl group to the free amino group of methionyl-tRNA(fMet). The formyl group appears to play a dual role in the initiator identity of N-formylmethionyl-tRNA by promoting its recognition by IF2 and preventing the misappropriation of this tRNA by the elongation apparatus. The polypeptide is Methionyl-tRNA formyltransferase (Streptococcus pyogenes serotype M3 (strain ATCC BAA-595 / MGAS315)).